A 466-amino-acid polypeptide reads, in one-letter code: FBD-associated F-box protein At5g22730 (466 aa).

An F-box domain is found at Glu27–Tyr80. The 52-residue stretch at Asp385–Leu436 folds into the FBD domain.

This chain is FBD-associated F-box protein At5g22730, found in Arabidopsis thaliana (Mouse-ear cress).